The primary structure comprises 791 residues: MAKFVLNQNLPDLGGPPLYPGPTGSARSPSSPYSVETPYGFHLDLDFLKYVEEIERGPASRRTPGPPHARRPRASRTGLAGARSPGAWTSSESLASDDGGASGALSPGAFPGLSLPPLSPRSLSRNPRVEHTLLETSRRLEQAQARERALSPARAVTRSPRGSGRSSPAPNPALASPGPAQLQLVREQMAAALRRLRELEDQARALPELQEQVRALRAEKARLLAGRVQPEQEVEIEARPDKLAQLRRLTERLATSDRGVRSRASPRAEDPDGLAARRSEGALQVLDPGSRTPDGEPRTRETGTEVVPETREVDAQAVPETGEAGVEVVPETVEVDTWVTEELLGLPEAAERELELLRTSLEHQRGVSELLRGRLRELEEAHEAAVTRPQSRDVAAQTTLGCTEKTTQTELPVENQPRPTAGDEMAPVGILKSIMKKKDGIPGAQSSQGPKSLQFVGVLNGEYESSSSEDGNSDDEDGVAEHPRSSSSGSDDSSGGSDAGTPGPHNDKDAGDCELETHPELTAGREGRCELNPRLREACIALNQQLNRPRGVTSRDGNAARLVAQEWFRVSSQKRSQAESVAGVLRGVKSLGPELLAYVVNLADGNGNTALHYSVSHGNLAISSLLLDTGVCDVNHQNRAGYSALMLAALTSVGQEEEDMAVAQRLFSMGDVNAKASQTGQTALMLAISHGHQDMVAALLECGADVNVQDADGATALMCASEYGRLDTVQLLLAQPGCDLTILDNEGTSALAIALEAEQDEVAALLHAHLTSNHQGQSSTGSPTAKECNDK.

Disordered regions lie at residues 1 to 37 (MAKFVLNQNLPDLGGPPLYPGPTGSARSPSSPYSVET), 56 to 181 (RGPA…GPAQ), 254 to 312 (ATSD…ETRE), 401 to 425 (GCTEKTTQTELPVENQPRPTAGDEM), and 463 to 514 (YESS…GDCE). A compositionally biased stretch (polar residues) spans 25-34 (SARSPSSPYS). The span at 105-125 (LSPGAFPGLSLPPLSPRSLSR) shows a compositional bias: low complexity. Positions 127-149 (PRVEHTLLETSRRLEQAQARERA) are enriched in basic and acidic residues. 6 positions are modified to phosphoserine: serine 151, serine 159, serine 163, serine 166, serine 167, and serine 176. The span at 158–180 (RSPRGSGRSSPAPNPALASPGPA) shows a compositional bias: low complexity. A coiled-coil region spans residues 180–229 (AQLQLVREQMAAALRRLRELEDQARALPELQEQVRALRAEKARLLAGRVQ). Basic and acidic residues-rich tracts occupy residues 254–280 (ATSDRGVRSRASPRAEDPDGLAARRSE) and 293–312 (PDGEPRTRETGTEVVPETRE). At serine 279 the chain carries Phosphoserine. The span at 401–410 (GCTEKTTQTE) shows a compositional bias: polar residues. A compositionally biased stretch (low complexity) spans 485–496 (SSSSGSDDSSGG). Over residues 505-514 (HNDKDAGDCE) the composition is skewed to basic and acidic residues. 5 ANK repeats span residues 606–636 (NGNTALHYSVSHGNLAISSLLLDTGVCDVNH), 640–677 (AGYSALMLAALTSVGQEEEDMAVAQRLFSMGDVNAKAS), 679–708 (TGQTALMLAISHGHQDMVAALLECGADVNV), 712–742 (DGATALMCASEYGRLDTVQLLLAQPGCDLTI), and 746–775 (EGTSALAIALEAEQDEVAALLHAHLTSNHQ). The segment covering 772 to 783 (SNHQGQSSTGSP) has biased composition (polar residues). The interval 772-791 (SNHQGQSSTGSPTAKECNDK) is disordered.

In terms of biological role, may be involved in the control of cytoskeleton formation by regulating actin polymerization. This Mus musculus (Mouse) protein is KN motif and ankyrin repeat domain-containing protein 3.